The primary structure comprises 673 residues: Elongation factor G 1 (673 aa).

Residues 3–277 (KELRNIGIIA…SIVDYLPSPL (275 aa)) enclose the tr-type G domain. Residues 12–19 (AHIDAGKT), 76–80 (DTPGH), and 130–133 (NKMD) each bind GTP.

The protein belongs to the TRAFAC class translation factor GTPase superfamily. Classic translation factor GTPase family. EF-G/EF-2 subfamily.

Its subcellular location is the cytoplasm. Catalyzes the GTP-dependent ribosomal translocation step during translation elongation. During this step, the ribosome changes from the pre-translocational (PRE) to the post-translocational (POST) state as the newly formed A-site-bound peptidyl-tRNA and P-site-bound deacylated tRNA move to the P and E sites, respectively. Catalyzes the coordinated movement of the two tRNA molecules, the mRNA and conformational changes in the ribosome. In Syntrophomonas wolfei subsp. wolfei (strain DSM 2245B / Goettingen), this protein is Elongation factor G 1.